A 698-amino-acid chain; its full sequence is DNA ligase (698 aa).

NAD(+) is bound by residues 40–44 (DGEYD), 89–90 (SL), and Glu-123. The active-site N6-AMP-lysine intermediate is Lys-125. NAD(+) is bound by residues Arg-146, Glu-184, Lys-300, and Lys-324. Zn(2+) contacts are provided by Cys-418, Cys-421, Cys-436, and Cys-442. The BRCT domain maps to 620–698 (AGDSPLAGKT…EAEFRAMSGG (79 aa)).

This sequence belongs to the NAD-dependent DNA ligase family. LigA subfamily. Mg(2+) serves as cofactor. Requires Mn(2+) as cofactor.

The enzyme catalyses NAD(+) + (deoxyribonucleotide)n-3'-hydroxyl + 5'-phospho-(deoxyribonucleotide)m = (deoxyribonucleotide)n+m + AMP + beta-nicotinamide D-nucleotide.. DNA ligase that catalyzes the formation of phosphodiester linkages between 5'-phosphoryl and 3'-hydroxyl groups in double-stranded DNA using NAD as a coenzyme and as the energy source for the reaction. It is essential for DNA replication and repair of damaged DNA. This chain is DNA ligase, found in Rhodospirillum rubrum (strain ATCC 11170 / ATH 1.1.1 / DSM 467 / LMG 4362 / NCIMB 8255 / S1).